We begin with the raw amino-acid sequence, 375 residues long: Peptide chain release factor 1 (375 aa).

At glutamine 237 the chain carries N5-methylglutamine. The segment covering 289 to 299 has biased composition (basic and acidic residues); that stretch reads AAREAQERQER. The disordered stretch occupies residues 289-326; the sequence is AAREAQERQERASQVGSGDRSEKIRTYNYPQNRVTDHR.

Belongs to the prokaryotic/mitochondrial release factor family. Methylated by PrmC. Methylation increases the termination efficiency of RF1.

It is found in the cytoplasm. Functionally, peptide chain release factor 1 directs the termination of translation in response to the peptide chain termination codons UAG and UAA. This chain is Peptide chain release factor 1 (prfA), found in Deinococcus radiodurans (strain ATCC 13939 / DSM 20539 / JCM 16871 / CCUG 27074 / LMG 4051 / NBRC 15346 / NCIMB 9279 / VKM B-1422 / R1).